We begin with the raw amino-acid sequence, 569 residues long: Proline--tRNA ligase (569 aa).

Belongs to the class-II aminoacyl-tRNA synthetase family. ProS type 1 subfamily. As to quaternary structure, homodimer.

Its subcellular location is the cytoplasm. The enzyme catalyses tRNA(Pro) + L-proline + ATP = L-prolyl-tRNA(Pro) + AMP + diphosphate. Its function is as follows. Catalyzes the attachment of proline to tRNA(Pro) in a two-step reaction: proline is first activated by ATP to form Pro-AMP and then transferred to the acceptor end of tRNA(Pro). As ProRS can inadvertently accommodate and process non-cognate amino acids such as alanine and cysteine, to avoid such errors it has two additional distinct editing activities against alanine. One activity is designated as 'pretransfer' editing and involves the tRNA(Pro)-independent hydrolysis of activated Ala-AMP. The other activity is designated 'posttransfer' editing and involves deacylation of mischarged Ala-tRNA(Pro). The misacylated Cys-tRNA(Pro) is not edited by ProRS. This is Proline--tRNA ligase from Endomicrobium trichonymphae.